We begin with the raw amino-acid sequence, 121 residues long: Small ribosomal subunit protein uS13 (121 aa).

The interval 97–121 (VRGQRTRTNARTRRGARKTVAGKKK) is disordered. Basic residues predominate over residues 100–121 (QRTRTNARTRRGARKTVAGKKK).

Belongs to the universal ribosomal protein uS13 family. Part of the 30S ribosomal subunit. Forms a loose heterodimer with protein S19. Forms two bridges to the 50S subunit in the 70S ribosome.

Its function is as follows. Located at the top of the head of the 30S subunit, it contacts several helices of the 16S rRNA. In the 70S ribosome it contacts the 23S rRNA (bridge B1a) and protein L5 of the 50S subunit (bridge B1b), connecting the 2 subunits; these bridges are implicated in subunit movement. Contacts the tRNAs in the A and P-sites. The chain is Small ribosomal subunit protein uS13 from Parasynechococcus marenigrum (strain WH8102).